A 558-amino-acid polypeptide reads, in one-letter code: Glypican-1 (558 aa).

The signal sequence occupies residues 1–23 (MELRARGWWLLCAAAALVACARG). Cystine bridges form between C32/C68, C62/C256, C69/C259, C191/C343, C246/C279, C268/C415, and C272/C401. N-linked (GlcNAc...) asparagine glycosylation is found at N79 and N116. Positions 341–374 (QGCGNPKVNPQGPGPEEKRRRGKLAPRERPPSGT) are disordered. Basic and acidic residues predominate over residues 355-370 (PEEKRRRGKLAPRERP). S486, S488, and S490 each carry an O-linked (Xyl...) (heparan sulfate) serine glycan. The interval 505-534 (RKSSSSRTPLTHALPGLSEQEGQKTSAASC) is disordered. Residue S530 is the site of GPI-anchor amidated serine attachment. Residues 531–558 (AASCPQPPTFLLPLLLFLALTVARPRWR) constitute a propeptide, removed in mature form.

The protein belongs to the glypican family. S-nitrosylated in a Cu(2+)-dependent manner. Nitric acid (NO) is released from the nitrosylated cysteines by ascorbate or by some other reducing agent, in a Cu(2+) or Zn(2+) dependent manner. This free nitric oxide is then capable of cleaving the heparan sulfate side chains. In terms of processing, N- and O-glycosylated. N-glycosylation is mainly of the complex type containing sialic acid. O-glycosylated with heparan sulfate. The heparan sulfate chains can be cleaved either by the action of heparanase or, degraded by a deaminative process that uses nitric oxide (NO) released from the S-nitrosylated cysteines. This process is triggered by ascorbate, or by some other reducing agent, in a Cu(2+)- or Zn(2+) dependent manner. Cu(2+) ions are provided by ceruloproteins such as APP, PRNP or CP which associate with GCP1 in intracellular compartments or lipid rafts. Post-translationally, this cell-associated glypican is further processed to give rise to a medium-released species.

It is found in the cell membrane. The protein resides in the endosome. Its subcellular location is the secreted. The protein localises to the extracellular space. Functionally, cell surface proteoglycan that bears heparan sulfate. Binds, via the heparan sulfate side chains, alpha-4 (V) collagen and participates in Schwann cell myelination. May act as a catalyst in increasing the rate of conversion of prion protein PRPN(C) to PRNP(Sc) via associating (via the heparan sulfate side chains) with both forms of PRPN, targeting them to lipid rafts and facilitating their interaction. Required for proper skeletal muscle differentiation by sequestering FGF2 in lipid rafts preventing its binding to receptors (FGFRs) and inhibiting the FGF-mediated signaling. The sequence is that of Glypican-1 (GPC1) from Homo sapiens (Human).